Consider the following 181-residue polypeptide: Peptide deformylase (181 aa).

2 residues coordinate Fe cation: C103 and H145. Residue E146 is part of the active site. Residue H149 coordinates Fe cation.

The protein belongs to the polypeptide deformylase family. It depends on Fe(2+) as a cofactor.

It carries out the reaction N-terminal N-formyl-L-methionyl-[peptide] + H2O = N-terminal L-methionyl-[peptide] + formate. In terms of biological role, removes the formyl group from the N-terminal Met of newly synthesized proteins. Requires at least a dipeptide for an efficient rate of reaction. N-terminal L-methionine is a prerequisite for activity but the enzyme has broad specificity at other positions. This is Peptide deformylase from Orientia tsutsugamushi (strain Ikeda) (Rickettsia tsutsugamushi).